A 168-amino-acid chain; its full sequence is Endoribonuclease YbeY (168 aa).

Residues histidine 125, histidine 129, and histidine 135 each contribute to the Zn(2+) site.

This sequence belongs to the endoribonuclease YbeY family. The cofactor is Zn(2+).

It localises to the cytoplasm. In terms of biological role, single strand-specific metallo-endoribonuclease involved in late-stage 70S ribosome quality control and in maturation of the 3' terminus of the 16S rRNA. The protein is Endoribonuclease YbeY of Rhodopseudomonas palustris (strain BisB18).